Here is a 180-residue protein sequence, read N- to C-terminus: ATP synthase subunit delta (180 aa).

The protein belongs to the ATPase delta chain family. In terms of assembly, F-type ATPases have 2 components, F(1) - the catalytic core - and F(0) - the membrane proton channel. F(1) has five subunits: alpha(3), beta(3), gamma(1), delta(1), epsilon(1). F(0) has three main subunits: a(1), b(2) and c(10-14). The alpha and beta chains form an alternating ring which encloses part of the gamma chain. F(1) is attached to F(0) by a central stalk formed by the gamma and epsilon chains, while a peripheral stalk is formed by the delta and b chains.

It localises to the cell membrane. In terms of biological role, f(1)F(0) ATP synthase produces ATP from ADP in the presence of a proton or sodium gradient. F-type ATPases consist of two structural domains, F(1) containing the extramembraneous catalytic core and F(0) containing the membrane proton channel, linked together by a central stalk and a peripheral stalk. During catalysis, ATP synthesis in the catalytic domain of F(1) is coupled via a rotary mechanism of the central stalk subunits to proton translocation. Its function is as follows. This protein is part of the stalk that links CF(0) to CF(1). It either transmits conformational changes from CF(0) to CF(1) or is implicated in proton conduction. This chain is ATP synthase subunit delta, found in Bacillus mycoides (strain KBAB4) (Bacillus weihenstephanensis).